The sequence spans 490 residues: Adenylosuccinate synthetase, chloroplastic (490 aa).

Residues 1 to 45 constitute a chloroplast transit peptide; it reads MSLSSLTLDSNPRFAVGGPYHRRYPPLHHPRSFVSCSAKRPAVSA. Ser46 carries the post-translational modification N-acetylserine. GTP-binding positions include 77–83 and 105–107; these read GDEGKGK and GHT. Residue Asp78 is the Proton acceptor of the active site. The Mg(2+) site is built by Asp78 and Gly105. IMP-binding positions include 78-81, 103-106, Thr195, Arg209, Gln289, Thr304, and Arg368; these read DEGK and NAGH. The Proton donor role is filled by His106. Residue 364 to 370 coordinates substrate; the sequence is TTTGRPR. GTP is bound by residues Arg370, 396–398, and 479–481; these read KLD and GIG.

The protein belongs to the adenylosuccinate synthetase family. As to quaternary structure, homodimer. Mg(2+) is required as a cofactor.

The protein localises to the plastid. Its subcellular location is the chloroplast. It catalyses the reaction IMP + L-aspartate + GTP = N(6)-(1,2-dicarboxyethyl)-AMP + GDP + phosphate + 2 H(+). Its pathway is purine metabolism; AMP biosynthesis via de novo pathway; AMP from IMP: step 1/2. Functionally, plays an important role in the de novo pathway and in the salvage pathway of purine nucleotide biosynthesis. Catalyzes the first committed step in the biosynthesis of AMP from IMP. This chain is Adenylosuccinate synthetase, chloroplastic, found in Arabidopsis thaliana (Mouse-ear cress).